Reading from the N-terminus, the 364-residue chain is Transcription elongation factor, mitochondrial (364 aa).

The transit peptide at 1-39 (MAWRTNLACLIKAGGRRWFPVPEYSSLPPVLNNTCSVRK) directs the protein to the mitochondrion.

It belongs to the TEFM family. As to quaternary structure, interacts with POLRMT.

It localises to the mitochondrion matrix. The protein resides in the mitochondrion nucleoid. Its function is as follows. Transcription elongation factor which increases mitochondrial RNA polymerase processivity. Regulates transcription of the mitochondrial genome, including genes important for the oxidative phosphorylation machinery. The protein is Transcription elongation factor, mitochondrial (Tefm) of Mus musculus (Mouse).